Reading from the N-terminus, the 372-residue chain is Lysophosphatidic acid receptor 5 (372 aa).

At 1-30 (MFANSSANTTSTNSSVLQCPDYRDTHRLHM) the chain is on the extracellular side. 3 N-linked (GlcNAc...) asparagine glycosylation sites follow: asparagine 4, asparagine 8, and asparagine 13. The chain crosses the membrane as a helical span at residues 31 to 51 (VVYSLVLATGLPLNALALWVF). The Cytoplasmic segment spans residues 52–59 (LRVLRVHS). Residues 60 to 80 (VVSVYMCNLAASDLLFTLSLP) form a helical membrane-spanning segment. At 81–100 (LRLSYYAQHHWPFPGFLCQT) the chain is on the extracellular side. Cysteine 98 and cysteine 179 form a disulfide bridge. The helical transmembrane segment at 101-121 (SGAIFQMNMYGSCLFLMLINV) threads the bilayer. The Cytoplasmic portion of the chain corresponds to 122–140 (DRYAAIVHPLRLRHLRRPR). A helical membrane pass occupies residues 141–161 (VARRLCLGVWALILLFAVPAA). At 162–191 (RVHSPSHCTYKNITVRLCFESFSDELWKGR) the chain is on the extracellular side. Asparagine 173 carries N-linked (GlcNAc...) asparagine glycosylation. A helical membrane pass occupies residues 192–212 (LLPLLLLAEILGFLLPLAAVV). Over 213–243 (YSSGRVFWTLARPDATQSQRRRKTVRLLLAN) the chain is Cytoplasmic. The chain crosses the membrane as a helical span at residues 244 to 264 (LIIFLLCFVPYNSTLAVYGLL). Over 265–280 (RANLVKNSIQDRDQVR) the chain is Extracellular. A helical transmembrane segment spans residues 281-301 (GVLMIMVLLAGANCVLDPLVY). The Cytoplasmic portion of the chain corresponds to 302-372 (YFSAEGFRNT…PDNCSQDSAL (71 aa)).

The protein belongs to the G-protein coupled receptor 1 family.

The protein resides in the cell membrane. Its function is as follows. Receptor for lysophosphatidic acid (LPA), a mediator of diverse cellular activities. This chain is Lysophosphatidic acid receptor 5 (Lpar5), found in Mus musculus (Mouse).